The sequence spans 147 residues: Large ribosomal subunit protein uL16 (147 aa).

Belongs to the universal ribosomal protein uL16 family. Part of the 50S ribosomal subunit.

Functionally, binds 23S rRNA and is also seen to make contacts with the A and possibly P site tRNAs. The chain is Large ribosomal subunit protein uL16 from Finegoldia magna (strain ATCC 29328 / DSM 20472 / WAL 2508) (Peptostreptococcus magnus).